Reading from the N-terminus, the 194-residue chain is Large ribosomal subunit protein eL15 (194 aa).

The segment at 165 to 194 (AGKKGRGLRNKGKGAEKVRPSIRANEGKGK) is disordered. Residues 167 to 176 (KKGRGLRNKG) show a composition bias toward basic residues. The span at 177 to 194 (KGAEKVRPSIRANEGKGK) shows a compositional bias: basic and acidic residues.

Belongs to the eukaryotic ribosomal protein eL15 family. Part of the 50S ribosomal subunit.

The polypeptide is Large ribosomal subunit protein eL15 (Pyrococcus furiosus (strain ATCC 43587 / DSM 3638 / JCM 8422 / Vc1)).